A 2514-amino-acid polypeptide reads, in one-letter code: Highly reducing polyketide synthase sphB (2514 aa).

Positions 66–486 constitute a Ketosynthase family 3 (KS3) domain; that stretch reads QVPIAICGMA…GANAHVILES (421 aa). Active-site for beta-ketoacyl synthase activity residues include C238, H374, and H409. The 325-residue stretch at 580–904 folds into the Malonyl-CoA:ACP transacylase (MAT) domain; the sequence is MVFTGQGAQW…AIGALHSLNV (325 aa). The interval 950 to 1079 is N-terminal hotdog fold; sequence HDLLGARVAE…GEVCAQSSAP (130 aa). In terms of domain architecture, PKS/mFAS DH spans 950 to 1240; that stretch reads HDLLGARVAE…AADISDTHAA (291 aa). The Proton acceptor; for dehydratase activity role is filled by H982. The C-terminal hotdog fold stretch occupies residues 1089–1240; that stretch reads PRTLNVRKWY…AADISDTHAA (152 aa). D1150 (proton donor; for dehydratase activity) is an active-site residue. The tract at residues 1319-1578 is methyltransferase (CMet) domain; the sequence is WTGLDHEAIS…EPHQVTTTMV (260 aa). Residues 1779–2092 enclose the Enoyl reductase (ER) domain; that stretch reads GRVNSLHYAR…KGQHIGRVGV (314 aa). One can recognise a Ketoreductase (KR) domain in the interval 2120–2297; that stretch reads ASYLMVGGLG…ASVVDMGAVE (178 aa). Residues 2427-2504 enclose the Carrier domain; it reads EAAKLFAVEI…ILGQYAANEV (78 aa). At S2464 the chain carries O-(pantetheine 4'-phosphoryl)serine.

Requires pantetheine 4'-phosphate as cofactor.

The catalysed reaction is holo-[ACP] + 8 malonyl-CoA + acetyl-CoA + 5 AH2 + 8 NADPH + 16 H(+) = (3R)-hydroxyoctadeca-4,10-dienoyl-[ACP] + 5 A + 8 CO2 + 8 NADP(+) + 9 CoA + 7 H2O. Its pathway is secondary metabolite biosynthesis. Highly reducing polyketide synthase; part of the gene cluster that mediates the biosynthesis of sphingofungins, bioactive molecules acting as sphingolipid inhibitors via inhibiting serine palmitoyl transferase (SPT). Within the pathway, sphB catalyzes the first step of sphingofungin biosynthesis by condensing 8 units of malonyl-CoA with one starter unit of acetyl-CoA, leading to an C18 polyketide precursor 3-hydroxyoctadeca-4,10-dienoyl-ACP containing one delta-6 desaturation and one delta-12 desaturation. The PKS sphB does not contain any putative thioesterase domain for releasing the nascent polyketide chain and it has been suggested that aminoacyl transferases can facilitate the polyketide chain release. The aminoacyl transferase sphA uses the sphB product to produce 3-keto-presphingofungin by adding an aminomalonate molecule. SphF then reduces the C-3 ketone of 3-keto-presphingofungin which leads to presphingofungin. The cytochrome P450 monooxygenase sphH converts presphingofungin into sphingofungin B1 which is further converted to sphingofungin B by the dioxygenase sphC. SphC is also able to convert presphingofungin into sphingofungin B2. The acetyltransferase sphE acetylates sphingofungin B to produce sphingofungin C, but can also convert sphingofungin B1 into sphingofungin C1 and sphingofungin B2 into sphingofungin C2. Finally, sphingofungin C can be spontaneously converted into sphingofungin D. The sequence is that of Highly reducing polyketide synthase sphB from Aspergillus fumigatus (strain CBS 144.89 / FGSC A1163 / CEA10) (Neosartorya fumigata).